Consider the following 404-residue polypeptide: Voltage-gated potassium channel subunit beta-3 (404 aa).

A compositionally biased stretch (polar residues) spans 1–14 (MQVSIACTEQNLRS). The segment at 1–77 (MQVSIACTEQ…LRESTGRGTG (77 aa)) is disordered. Positions 28-50 (PGGGNGGPAGGGHGNPPGGGGSG) are enriched in gly residues. NADP(+)-binding residues include Thr97, Trp98, Gln104, and Asp126. Residue Tyr131 is the Proton donor/acceptor of the active site. Asn199, Ser229, Arg230, Gln255, Trp284, Pro286, Leu287, Ala288, Cys289, Lys295, Arg305, Gly364, Ser366, Gln370, and Glu373 together coordinate NADP(+).

It belongs to the shaker potassium channel beta subunit family. In terms of assembly, forms heteromultimeric complex with alpha subunits. Interacts with KCNA5 and KCNB2. As to expression, brain specific. Most prominent expression in cerebellum. Weaker signals detected in cortex, occipital lobe, frontal lobe and temporal lobe. Not detected in spinal cord, heart, lung, liver, kidney, pancreas, placenta and skeletal muscle.

It localises to the cytoplasm. Functionally, regulatory subunit of the voltage-gated potassium (Kv) channels composed of pore-forming and potassium-conducting alpha subunits and of regulatory beta subunit. The beta-3/KCNAB3 subunit may mediate closure of potassium channels. Increases inactivation of Kv1.5/KCNA5 alpha subunit-containing channels. May display nicotinamide adenine dinucleotide phosphate (NADPH)-dependent aldoketoreductase activity. The binding of oxidized and reduced NADP(H) cofactors may be required for the regulation of potassium channel activity. This is Voltage-gated potassium channel subunit beta-3 from Homo sapiens (Human).